Consider the following 181-residue polypeptide: Thioredoxin M-type, chloroplastic (181 aa).

Residues 1–67 constitute a chloroplast transit peptide; sequence MAIENCLQLS…RQFRYSSVVC (67 aa). Positions 68–180 constitute a Thioredoxin domain; that stretch reads KASEAVKEVQ…LTDSIEKYLS (113 aa). Catalysis depends on nucleophile residues Cys-104 and Cys-107. A disulfide bridge connects residues Cys-104 and Cys-107.

The protein belongs to the thioredoxin family. Plant M-type subfamily. As to quaternary structure, forms a complex with heterodimeric ferredoxin-thioredoxin reductase (FTR) and ferredoxin.

Its subcellular location is the plastid. It is found in the chloroplast. Functionally, participates in various redox reactions through the reversible oxidation of the active center dithiol to a disulfide. The M form is known to activate NADP-malate dehydrogenase. This Spinacia oleracea (Spinach) protein is Thioredoxin M-type, chloroplastic.